Consider the following 203-residue polypeptide: Probable cytochrome c oxidase subunit 3 (203 aa).

The next 5 helical transmembrane spans lie at 30–50 (IVWL…YFSA), 71–91 (VPVT…VFAA), 96–116 (IFGL…FVLG), 143–163 (ATGF…FLLV), and 179–199 (IVVS…FTVI).

Belongs to the cytochrome c oxidase subunit 3 family.

It localises to the cell membrane. It carries out the reaction 4 Fe(II)-[cytochrome c] + O2 + 8 H(+)(in) = 4 Fe(III)-[cytochrome c] + 2 H2O + 4 H(+)(out). In Mycobacterium bovis (strain ATCC BAA-935 / AF2122/97), this protein is Probable cytochrome c oxidase subunit 3 (ctaE).